We begin with the raw amino-acid sequence, 349 residues long: Fe(3+) ions import ATP-binding protein FbpC (349 aa).

One can recognise an ABC transporter domain in the interval leucine 7–methionine 237. Glycine 39–threonine 46 provides a ligand contact to ATP.

It belongs to the ABC transporter superfamily. Fe(3+) ion importer (TC 3.A.1.10) family. The complex is composed of two ATP-binding proteins (FbpC), two transmembrane proteins (FbpB) and a solute-binding protein (FbpA).

Its subcellular location is the cell inner membrane. It catalyses the reaction Fe(3+)(out) + ATP + H2O = Fe(3+)(in) + ADP + phosphate + H(+). In terms of biological role, part of the ABC transporter complex FbpABC involved in Fe(3+) ions import. Responsible for energy coupling to the transport system. The polypeptide is Fe(3+) ions import ATP-binding protein FbpC (Pasteurella multocida (strain Pm70)).